The chain runs to 659 residues: Acetyl-coenzyme A synthetase (659 aa).

Positions 1 to 35 (MATEQTKGQSSESISSVLSERRKFPPPEAFSSQSH) are disordered. CoA-binding positions include 205–208 (RRGS), Thr323, and Asn347. ATP contacts are provided by residues 399–401 (GEP), 423–428 (DTWWQT), Asp512, and Arg527. Ser535 contributes to the CoA binding site. Residue Arg538 coordinates ATP. 3 residues coordinate Mg(2+): Val549, His551, and Val554. An N6-acetyllysine modification is found at Lys621.

The protein belongs to the ATP-dependent AMP-binding enzyme family. Mg(2+) is required as a cofactor. In terms of processing, acetylated. Deacetylation by the SIR2-homolog deacetylase activates the enzyme.

It catalyses the reaction acetate + ATP + CoA = acetyl-CoA + AMP + diphosphate. Catalyzes the conversion of acetate into acetyl-CoA (AcCoA), an essential intermediate at the junction of anabolic and catabolic pathways. AcsA undergoes a two-step reaction. In the first half reaction, AcsA combines acetate with ATP to form acetyl-adenylate (AcAMP) intermediate. In the second half reaction, it can then transfer the acetyl group from AcAMP to the sulfhydryl group of CoA, forming the product AcCoA. The chain is Acetyl-coenzyme A synthetase from Chlorobaculum tepidum (strain ATCC 49652 / DSM 12025 / NBRC 103806 / TLS) (Chlorobium tepidum).